The following is a 295-amino-acid chain: Acetylglutamate kinase (295 aa).

Residues 64–65 (GG), Arg-86, and Asn-179 contribute to the substrate site.

The protein belongs to the acetylglutamate kinase family. ArgB subfamily.

Its subcellular location is the cytoplasm. The catalysed reaction is N-acetyl-L-glutamate + ATP = N-acetyl-L-glutamyl 5-phosphate + ADP. Its pathway is amino-acid biosynthesis; L-arginine biosynthesis; N(2)-acetyl-L-ornithine from L-glutamate: step 2/4. In terms of biological role, catalyzes the ATP-dependent phosphorylation of N-acetyl-L-glutamate. The polypeptide is Acetylglutamate kinase (Thermosynechococcus vestitus (strain NIES-2133 / IAM M-273 / BP-1)).